Reading from the N-terminus, the 805-residue chain is MAVDKKRKNTKAPASGPKRRKTQPSSKQIKRPVSVDALAWKTVDIPEMFDDAEGFFGLEEITGVDIVKDGDVVKFMAAVPKSEAEVEDDGEEFGGFDDEETPKPAGNADQEVKTSETKAEAASTPAKEKKASKDQRKPKEQQKQQKQQKQQPKKEQPNKAANKKNAEDKKKARKNEKTTVEPKDPELETDLFTKLEELPEPEEEEIDMSEWVPLDLSPRMISSIAKLRFSKPTVIQSKAIPEIMAGHDVIGKASTGSGKTLAFGIPVIESWLSAAETRKQNKEERKGATALILSPTRELAQQIRDHLQALCKGLPTAPYICSVLGGMAVQKQKRQLQVADIVIATPGRMWEVMSSDNSVLASLRNISFLVLDEADRLLKDGHFKEAEEIFKALDRPPVEENNEDQKMGGTDEEGQEEEEEDSEEEEEEEEEHVNKRQTLIFSATFNKNLQQKLAGKSKFKATSTQDMEYLLQKLNFRETPKFVDANPVHQMAENLKEGLIMCGDMEKDLYLYATLMLQPTRRALVFTNSVNSVRRLTPLLENLNLPAFPLHSGMIQQARLRSIDRFKANEGAKKKNGSAAILVATDVAARGLDIPDVDLVIHYHVPRAAEDYVHRSGRTARASNSGTSILLCGPKEAVPTQRLVAKVHAQAEVKAGNSGNNTKKLVSSGLRTIDIDRRIVAKLRERVDLAKKIADAVQAKTMGGKEDDWMKKAAEDLGVDYDSEELEKAGKWGGKGSSKKQKQKEAQQMSKGELASLRAALRDLLSKRINTGVSERYLTGLDVSELLKGEQGLFLGQVDGLGLDD.

The span at 1 to 10 shows a compositional bias: basic residues; it reads MAVDKKRKNT. Disordered stretches follow at residues 1–33 and 79–189; these read MAVDKKRKNTKAPASGPKRRKTQPSSKQIKRPV and VPKS…ELET. Acidic residues predominate over residues 85 to 100; the sequence is EVEDDGEEFGGFDDEE. Basic and acidic residues-rich tracts occupy residues 110–119, 126–143, and 164–189; these read QEVKTSETKA, AKEKKASKDQRKPKEQQK, and KNAEDKKKARKNEKTTVEPKDPELET. Positions 209–237 match the Q motif motif; that stretch reads SEWVPLDLSPRMISSIAKLRFSKPTVIQS. Residues 240-463 enclose the Helicase ATP-binding domain; sequence IPEIMAGHDV…AGKSKFKATS (224 aa). Position 253–260 (253–260) interacts with ATP; it reads ASTGSGKT. The DEAD box signature appears at 372-375; the sequence is DEAD. The span at 390–406 shows a compositional bias: basic and acidic residues; that stretch reads FKALDRPPVEENNEDQK. Residues 390–435 form a disordered region; that stretch reads FKALDRPPVEENNEDQKMGGTDEEGQEEEEEDSEEEEEEEEEHVNK. Residues 410–431 show a composition bias toward acidic residues; the sequence is TDEEGQEEEEEDSEEEEEEEEE. One can recognise a Helicase C-terminal domain in the interval 510–666; sequence YLYATLMLQP…NSGNNTKKLV (157 aa). The tract at residues 729-751 is disordered; that stretch reads AGKWGGKGSSKKQKQKEAQQMSK.

It belongs to the DEAD box helicase family. DDX24/MAK5 subfamily.

It localises to the nucleus. The protein localises to the nucleolus. It carries out the reaction ATP + H2O = ADP + phosphate + H(+). ATP-binding RNA helicase involved in the biogenesis of 60S ribosomal subunits and is required for the normal formation of 25S and 5.8S rRNAs. The sequence is that of ATP-dependent RNA helicase mak-5 (mak-5) from Neurospora crassa (strain ATCC 24698 / 74-OR23-1A / CBS 708.71 / DSM 1257 / FGSC 987).